The primary structure comprises 211 residues: Thymidylate kinase (211 aa).

Position 7-14 (7-14 (GIDASGKS)) interacts with ATP.

This sequence belongs to the thymidylate kinase family.

It catalyses the reaction dTMP + ATP = dTDP + ADP. Phosphorylation of dTMP to form dTDP in both de novo and salvage pathways of dTTP synthesis. This chain is Thymidylate kinase, found in Mesomycoplasma hyopneumoniae (strain 7448) (Mycoplasma hyopneumoniae).